We begin with the raw amino-acid sequence, 267 residues long: Interleukin-1 alpha (267 aa).

Positions 1–112 (MAKVPDLFED…DPEEGIIKPR (112 aa)) are excised as a propeptide. An N-linked (GlcNAc...) asparagine glycan is attached at Asn-64. The residue at position 82 (Lys-82) is an N6-acetyllysine. Positions 82–86 (KKRRL) are nuclear localization signal (NLS). Position 87 is a phosphoserine (Ser-87). N-linked (GlcNAc...) asparagine glycosylation is found at Asn-100 and Asn-141.

This sequence belongs to the IL-1 family. In terms of assembly, monomer. Interacts with TMED10; the interaction mediates the translocation from the cytoplasm into the ERGIC (endoplasmic reticulum-Golgi intermediate compartment) and thereby secretion. Interacts with IL1R1. Interacts with S100A13; this interaction is the first step in the export of IL1A, followed by direct translocation of this complex across the plasma membrane. Post-translationally, acetylated within its nuclear localization sequence, which impacts subcellular localization. Proteolytic processed by CAPN1 in a calcium-dependent manner. Cleavage from 31 kDa precursor to 18 kDa biologically active molecules. In terms of processing, phosphorylated. Phosphorylation greatly enhances susceptibility to digestion and promotes the conversion of pre-IL1A alpha to the biologically active IL1A.

The protein localises to the nucleus. It is found in the cytoplasm. Its subcellular location is the secreted. In terms of biological role, cytokine constitutively present intracellularly in nearly all resting non-hematopoietic cells that plays an important role in inflammation and bridges the innate and adaptive immune systems. After binding to its receptor IL1R1 together with its accessory protein IL1RAP, forms the high affinity interleukin-1 receptor complex. Signaling involves the recruitment of adapter molecules such as MYD88, IRAK1 or IRAK4. In turn, mediates the activation of NF-kappa-B and the three MAPK pathways p38, p42/p44 and JNK pathways. Within the cell, acts as an alarmin and cell death results in its liberation in the extracellular space after disruption of the cell membrane to induce inflammation and alert the host to injury or damage. In addition to its role as a danger signal, which occurs when the cytokine is passively released by cell necrosis, directly senses DNA damage and acts as signal for genotoxic stress without loss of cell integrity. The sequence is that of Interleukin-1 alpha (IL1A) from Oryctolagus cuniculus (Rabbit).